Here is a 502-residue protein sequence, read N- to C-terminus: Glycerol kinase (502 aa).

Position 14 (T14) interacts with ADP. Residues T14, T15, and S16 each contribute to the ATP site. T14 lines the sn-glycerol 3-phosphate pocket. R18 is an ADP binding site. Sn-glycerol 3-phosphate contacts are provided by R84, E85, and Y136. 3 residues coordinate glycerol: R84, E85, and Y136. A Phosphohistidine; by HPr modification is found at H232. Residue D246 participates in sn-glycerol 3-phosphate binding. 2 residues coordinate glycerol: D246 and Q247. ADP is bound by residues T268 and G311. Positions 268, 311, 315, and 412 each coordinate ATP. ADP is bound by residues G412 and N416.

The protein belongs to the FGGY kinase family. As to quaternary structure, homotetramer and homodimer (in equilibrium). The phosphoenolpyruvate-dependent sugar phosphotransferase system (PTS), including enzyme I, and histidine-containing protein (HPr) are required for the phosphorylation, which leads to the activation of the enzyme.

It carries out the reaction glycerol + ATP = sn-glycerol 3-phosphate + ADP + H(+). The protein operates within polyol metabolism; glycerol degradation via glycerol kinase pathway; sn-glycerol 3-phosphate from glycerol: step 1/1. With respect to regulation, activated by phosphorylation and inhibited by fructose 1,6-bisphosphate (FBP). Key enzyme in the regulation of glycerol uptake and metabolism. Catalyzes the phosphorylation of glycerol to yield sn-glycerol 3-phosphate. The protein is Glycerol kinase of Streptococcus pneumoniae (strain P1031).